A 264-amino-acid polypeptide reads, in one-letter code: Anamorsin homolog 2 (264 aa).

Residues 1–142 (MAATAAALAV…KVSWSMGSSF (142 aa)) are N-terminal SAM-like domain. Positions 143–174 (PLKKATKGLPKIQIDDDSELIDEDSLLTEDDL) are linker. Positions 185, 194, 197, and 199 each coordinate [2Fe-2S] cluster. The interval 185 to 199 (CEVGATRKACKNCTC) is fe-S binding site A. The [4Fe-4S] cluster site is built by C225, C228, C236, and C239. Short sequence motifs (cx2C motif) lie at residues 225–228 (CGNC) and 236–239 (CGTC). Positions 225 to 239 (CGNCGLGDAFRCGTC) are fe-S binding site B.

The protein belongs to the anamorsin family. As to quaternary structure, monomer. [2Fe-2S] cluster serves as cofactor. Requires [4Fe-4S] cluster as cofactor.

It is found in the cytoplasm. The protein resides in the mitochondrion intermembrane space. Its function is as follows. Component of the cytosolic iron-sulfur (Fe-S) protein assembly (CIA) machinery. Required for the maturation of extramitochondrial Fe-S proteins. Part of an electron transfer chain functioning in an early step of cytosolic Fe-S biogenesis, facilitating the de novo assembly of a [4Fe-4S] cluster on the cytosolic Fe-S scaffold complex. Electrons are transferred from NADPH via a FAD- and FMN-containing diflavin oxidoreductase. Together with the diflavin oxidoreductase, also required for the assembly of the diferric tyrosyl radical cofactor of ribonucleotide reductase (RNR), probably by providing electrons for reduction during radical cofactor maturation in the catalytic small subunit. The sequence is that of Anamorsin homolog 2 from Oryza sativa subsp. japonica (Rice).